Consider the following 800-residue polypeptide: DNA topoisomerase 4 subunit A (800 aa).

One can recognise a Topo IIA-type catalytic domain in the interval 31 to 495 (LPDVRDGLKP…EIEEIKIDKE (465 aa)). Catalysis depends on tyrosine 119, which acts as the O-(5'-phospho-DNA)-tyrosine intermediate.

The protein belongs to the type II topoisomerase GyrA/ParC subunit family. ParC type 2 subfamily. Heterotetramer composed of ParC and ParE.

The protein resides in the cell membrane. It carries out the reaction ATP-dependent breakage, passage and rejoining of double-stranded DNA.. Functionally, topoisomerase IV is essential for chromosome segregation. It relaxes supercoiled DNA. Performs the decatenation events required during the replication of a circular DNA molecule. The sequence is that of DNA topoisomerase 4 subunit A from Staphylococcus aureus (strain MW2).